We begin with the raw amino-acid sequence, 122 residues long: Cytochrome c-556 (122 aa).

4 residues coordinate heme: Met-11, Cys-111, Cys-114, and His-115. Residues Met-11, Cys-111, Cys-114, and His-115 each coordinate heme c.

In terms of assembly, monomer. Binds 1 heme c group covalently per subunit.

Its function is as follows. Low-spin monoheme cytochrome c. This chain is Cytochrome c-556, found in Agrobacterium tumefaciens (strain II Chrys).